A 379-amino-acid chain; its full sequence is Homoserine O-acetyltransferase (379 aa).

One can recognise an AB hydrolase-1 domain in the interval N52–E356. The active-site Nucleophile is the S157. R227 serves as a coordination point for substrate. Residues D320 and H350 contribute to the active site. D351 is a binding site for substrate.

The protein belongs to the AB hydrolase superfamily. MetX family. As to quaternary structure, homodimer.

Its subcellular location is the cytoplasm. The enzyme catalyses L-homoserine + acetyl-CoA = O-acetyl-L-homoserine + CoA. The protein operates within amino-acid biosynthesis; L-methionine biosynthesis via de novo pathway; O-acetyl-L-homoserine from L-homoserine: step 1/1. In terms of biological role, transfers an acetyl group from acetyl-CoA to L-homoserine, forming acetyl-L-homoserine. This is Homoserine O-acetyltransferase from Mycobacterium marinum (strain ATCC BAA-535 / M).